Here is an 85-residue protein sequence, read N- to C-terminus: Three-finger toxin MALT0044C (85 aa).

Positions 1–21 are cleaved as a signal peptide; that stretch reads MKTLLLTLVVVTIVCLDLGNT. Intrachain disulfides connect Cys-24-Cys-45, Cys-38-Cys-63, Cys-67-Cys-78, and Cys-79-Cys-84.

The protein belongs to the three-finger toxin family. Short-chain subfamily. Expressed by the venom gland.

It is found in the secreted. The polypeptide is Three-finger toxin MALT0044C (Micrurus altirostris (Uruguayan coral snake)).